We begin with the raw amino-acid sequence, 4080 residues long: Hybrid PKS-NRPS synthetase poxE (4080 aa).

One can recognise a Ketosynthase family 3 (KS3) domain in the interval 8–442 (REPIAIVGSG…GTNAHAIIEA (435 aa)). Active-site for beta-ketoacyl synthase activity residues include cysteine 181, histidine 320, and histidine 362. The interval 554 to 878 (VFTGQGAQWA…QRGMNDVEAM (325 aa)) is malonyl-CoA:ACP transacylase (MAT) domain. An N-terminal hotdog fold region spans residues 944-1078 (HPILGTRCPD…GRLVITYGPV (135 aa)). In terms of domain architecture, PKS/mFAS DH spans 944 to 1246 (HPILGTRCPD…AVPLEATNAD (303 aa)). The dehydratase (DH) domain stretch occupies residues 945–1243 (PILGTRCPDG…GIHAVPLEAT (299 aa)). Histidine 976 functions as the Proton acceptor; for dehydratase activity in the catalytic mechanism. Positions 1093–1246 (MVDVPSERFY…AVPLEATNAD (154 aa)) are C-terminal hotdog fold. Residue aspartate 1152 is the Proton donor; for dehydratase activity of the active site. A methyltransferase (MT) domain region spans residues 1400-1585 (HFSDYLASVV…GVDTFTSDAD (186 aa)). The tract at residues 2118 to 2292 (TYWLVGLTGS…AGSVMNIGAI (175 aa)) is ketoreductase (KR)domain. Residues 2399-2478 (TTDEIYEVIK…TIGEIIKFVL (80 aa)) form a peptidyl carrier protein region. Positions 2405–2481 (EVIKECFIVK…EIIKFVLEKL (77 aa)) constitute a Carrier 1 domain. Residue serine 2441 is modified to O-(pantetheine 4'-phosphoryl)serine. Residues 2488–2569 (SLGLSPPTGA…AASPSIHTEE (82 aa)) form a disordered region. The span at 2511–2525 (VVVERRNVPRLEKKI) shows a compositional bias: basic and acidic residues. The span at 2528–2545 (SAGSRTSSSVTGTSKSVS) shows a compositional bias: low complexity. Positions 2551–2565 (DTASSQTSEAASPSI) are enriched in polar residues. Positions 2607–3036 (KEPLSFGQSR…DSKQPGGHVS (430 aa)) are condensation. An adenylation region spans residues 3069-3478 (DMAKQYPQKL…DGRLRIEGRI (410 aa)). A Carrier 2 domain is found at 3593 to 3673 (AHLNEAQAQM…KMALLIKPQE (81 aa)). Residues 3598-3670 (AQAQMVQLWE…TLEKMALLIK (73 aa)) are thiolation. Serine 3633 is subject to O-(pantetheine 4'-phosphoryl)serine. Positions 3740–3959 (LTGATGFIGQ…DFVPVEQVVR (220 aa)) are reductase (RED) domain.

In the C-terminal section; belongs to the NRP synthetase family.

Its pathway is secondary metabolite biosynthesis. Its function is as follows. Hybrid PKS-NRPS synthetase; part of the gene cluster that mediates the biosynthesis of oxaleimides, cytotoxic compounds containing an unusual disubstituted succinimide moiety. The first step of the pathway is provided by the HR-PKS poxF that serves in a new mode of collaborative biosynthesis with the PKS-NRPS poxE, by providing the olefin containing amino acid substrate via the synthesis of an ACP-bound dec-4-enoate. The cytochrome P450 monooxygenase poxM-catalyzed oxidation at the alpha-position creates the enzyme-bound 2-hydroxydec-4-enoyl-ACP thioester, which may be prone to spontaneous hydrolysis to yield 2-hydroxydec-4-enoic acid due to increased electrophilicity of the carbonyl. 2-hydroxydec-4-enoic acid can then be further oxidized by poxM to yield the alpha-ketoacid 2-oxodec-4-enoicacid, which is reductively aminated by the aminotransferase poxL to yield (S,E)-2-aminodec-4-enoic acid. The Hybrid PKS-NRPS synthetase poxE then performs condensation between the octaketide product of its PKS modules and the amino group of (S,E)-2-aminodec-4-enoic acid which is activated and incorporated by the adenylation domain. The resulting aminoacyl product can be cyclized by the Diels-Alderase PoxQ and reductively released by the reductive (R) domain of poxE to yield an aldehyde intermediate. The released aldehyde is then substrate for a Knoevenagel condensation by the hydrolyase poxO followed by an oxidation at the 5-position of the pyrrolidone ring. The presence of the olefin from the amino acid building block allows for migration of the substituted allyl group to occur. This allylic transposition reaction takes place in a conjugate addition, semipinacol-like fashion to yield a succinimide intermediate. Iterative two-electron oxidations of the C7 methyl of the succinimide intermediate to the carboxylic acid can be catalyzed by one of two remaining cytochrome P450 monooxygenasess poxC or poxD to yield oxaleimide A. Subsequent oxidation yields the maleimide scaffold oxaleimide I. Both oxaleimide A and oxaleimide I can undergo oxidative modifications in the decalin ring to yield the series of products oxaleimides B to H. The sequence is that of Hybrid PKS-NRPS synthetase poxE from Penicillium oxalicum.